Here is a 487-residue protein sequence, read N- to C-terminus: Argininosuccinate lyase (487 aa).

It belongs to the lyase 1 family. Argininosuccinate lyase subfamily.

The protein resides in the cytoplasm. The enzyme catalyses 2-(N(omega)-L-arginino)succinate = fumarate + L-arginine. Its pathway is amino-acid biosynthesis; L-arginine biosynthesis; L-arginine from L-ornithine and carbamoyl phosphate: step 3/3. The polypeptide is Argininosuccinate lyase (Methanothrix thermoacetophila (strain DSM 6194 / JCM 14653 / NBRC 101360 / PT) (Methanosaeta thermophila)).